The primary structure comprises 213 residues: E3 ubiquitin-protein ligase NleG8 (213 aa).

The tract at residues 136–189 (CPITLCVPETGVFVKNARCSKVCSLYDISALTEMLRRNASHPLSREAFTPGMIV) is RING/U-box domain. The PDZ-binding motif motif lies at 211 to 213 (TRL).

Belongs to the NleG E3 ligase family. In terms of assembly, interacts with host GOPC (human protein).

The protein resides in the secreted. It is found in the host cytoplasm. It catalyses the reaction S-ubiquitinyl-[E2 ubiquitin-conjugating enzyme]-L-cysteine + [acceptor protein]-L-lysine = [E2 ubiquitin-conjugating enzyme]-L-cysteine + N(6)-ubiquitinyl-[acceptor protein]-L-lysine.. Functionally, effector proteins function to alter host cell physiology and promote bacterial survival in host tissues. This protein is an E3 ubiquitin-protein ligase that probably interferes with the host's ubiquitination pathway and targets host proteins for proteasomal degradation. Mice infected with a strain of bacteria deleted for this gene had an increased survival rate. Can be ubiquitinylated, and ubiquitinate ubiquitin, giving rise to polyubiquitin chains (in vitro). This chain is E3 ubiquitin-protein ligase NleG8, found in Citrobacter rodentium.